We begin with the raw amino-acid sequence, 171 residues long: Large ribosomal subunit protein uL10 (171 aa).

This sequence belongs to the universal ribosomal protein uL10 family. In terms of assembly, part of the ribosomal stalk of the 50S ribosomal subunit. The N-terminus interacts with L11 and the large rRNA to form the base of the stalk. The C-terminus forms an elongated spine to which L12 dimers bind in a sequential fashion forming a multimeric L10(L12)X complex.

Its function is as follows. Forms part of the ribosomal stalk, playing a central role in the interaction of the ribosome with GTP-bound translation factors. The chain is Large ribosomal subunit protein uL10 from Zymomonas mobilis subsp. mobilis (strain ATCC 31821 / ZM4 / CP4).